The following is a 2051-amino-acid chain: Fatty acid synthase subunit beta (2051 aa).

At M1 the chain carries N-acetylmethionine. The tract at residues 1–468 (MDAYSTRPLT…VYDTFDGSDL (468 aa)) is acetyltransferase. S274 acts as the For acetyltransferase activity in catalysis. The enoyl reductase stretch occupies residues 480-868 (VDCIIRLPVK…TRGVMLWKEF (389 aa)). T733 is subject to Phosphothreonine. S1121 is modified (phosphoserine). The segment at 1144-1626 (GSEINWRHAS…LPNTALKTSI (483 aa)) is dehydratase. A Glycyl lysine isopeptide (Lys-Gly) (interchain with G-Cter in ubiquitin) cross-link involves residue K1364. The MaoC-like domain maps to 1523-1648 (NGSTLEQKVN…KFETRNEDDV (126 aa)). Residues 1627-1845 (QHVGMINGRK…MTMQVAVPRD (219 aa)) are malonyl/palmitoyl transferase. S1808 functions as the For malonyltransferase activity in the catalytic mechanism.

Belongs to the fungal fatty acid synthetase subunit beta family. In terms of assembly, [Alpha(6)beta(6)] hexamers of two multifunctional subunits (alpha and beta).

It carries out the reaction acetyl-CoA + n malonyl-CoA + 2n NADPH + 4n H(+) = a long-chain-acyl-CoA + n CoA + n CO2 + 2n NADP(+).. The enzyme catalyses holo-[ACP] + acetyl-CoA = acetyl-[ACP] + CoA. It catalyses the reaction holo-[ACP] + malonyl-CoA = malonyl-[ACP] + CoA. The catalysed reaction is a (3R)-hydroxyacyl-[ACP] = a (2E)-enoyl-[ACP] + H2O. It carries out the reaction a 2,3-saturated acyl-[ACP] + NAD(+) = a (2E)-enoyl-[ACP] + NADH + H(+). The enzyme catalyses (9Z)-octadecenoyl-[ACP] + H2O = (9Z)-octadecenoate + holo-[ACP] + H(+). Fatty acid synthetase catalyzes the formation of long-chain fatty acids from acetyl-CoA, malonyl-CoA and NADPH. The beta subunit contains domains for: [acyl-carrier-protein] acetyltransferase and malonyltransferase, S-acyl fatty acid synthase thioesterase, enoyl-[acyl-carrier-protein] reductase, and 3-hydroxypalmitoyl-[acyl-carrier-protein] dehydratase. The polypeptide is Fatty acid synthase subunit beta (FAS1) (Saccharomyces cerevisiae (strain ATCC 204508 / S288c) (Baker's yeast)).